Consider the following 302-residue polypeptide: Nucleotide-binding protein Bcep18194_A6125 (302 aa).

Residue 8 to 15 (GISGSGKS) coordinates ATP. 57–60 (DARS) contacts GTP.

The protein belongs to the RapZ-like family.

In terms of biological role, displays ATPase and GTPase activities. The sequence is that of Nucleotide-binding protein Bcep18194_A6125 from Burkholderia lata (strain ATCC 17760 / DSM 23089 / LMG 22485 / NCIMB 9086 / R18194 / 383).